We begin with the raw amino-acid sequence, 761 residues long: 3'-5' RNA nuclease TATDN2 (761 aa).

6 disordered regions span residues 1–90 (MASE…HFLG), 135–181 (CSLK…LRDQ), 197–294 (KSMP…RRTV), 318–337 (KDRE…SDVE), 343–364 (RFSQ…SSFT), and 388–486 (SSPK…PKSH). Low complexity-rich tracts occupy residues 33-52 (APSS…PSSP) and 66-85 (SRRL…SSFS). Residues 247–294 (QKEKDATPEVSMEEDKTVPERSSFYDRRVVIDPQEKPSEEPLGDRRTV) are compositionally biased toward basic and acidic residues. The segment covering 388–402 (SSPKPSSYPSTGSSS) has biased composition (low complexity). Residues 417 to 431 (SDYSPNSTGSVQNTS) show a composition bias toward polar residues. Residues 452 to 470 (RSSEEREVKEKRTFQEEMP) show a composition bias toward basic and acidic residues. The a divalent metal cation site is built by H499, H501, E593, H630, H655, and D707.

The protein belongs to the metallo-dependent hydrolases superfamily. TatD-type hydrolase family. Mg(2+) is required as a cofactor.

It localises to the nucleus. Its function is as follows. Mg(2+)-dependent 3'RNA exonuclease and endonuclease that resolves R-loops via specific degradation of R-loop RNA stucture. Shows no activity against D-loop and minimal activity against the RNA strand of an RNA-DNA hybrid duplex oligomer. Has no 3' or 5' exonuclease activity, no uracil glycosylase activity, and no 5' flap endonuclease activity on DNA substrates. May have a role in maintaining genomic stability through its role in R-loop resolution. The sequence is that of 3'-5' RNA nuclease TATDN2 (TATDN2) from Homo sapiens (Human).